Reading from the N-terminus, the 227-residue chain is Cytochrome c oxidase subunit 2 (227 aa).

Residues 1 to 14 (MAYPMQLGFQDATS) lie on the Mitochondrial intermembrane side of the membrane. Residues 15–45 (PIMEELLHFHDHTLMIVFLISSLVLYIISLM) traverse the membrane as a helical segment. Topologically, residues 46 to 59 (LTTKLTHTSTMDAQ) are mitochondrial matrix. A helical membrane pass occupies residues 60–87 (EVETIWTILPAIILILIALPSLRILYMM). The Mitochondrial intermembrane segment spans residues 88-227 (DEINNPSLTV…YFEKWSASML (140 aa)). Residues histidine 161, cysteine 196, glutamate 198, cysteine 200, histidine 204, and methionine 207 each contribute to the Cu cation site. Glutamate 198 contributes to the Mg(2+) binding site. A Phosphotyrosine modification is found at tyrosine 218.

This sequence belongs to the cytochrome c oxidase subunit 2 family. Component of the cytochrome c oxidase (complex IV, CIV), a multisubunit enzyme composed of 14 subunits. The complex is composed of a catalytic core of 3 subunits MT-CO1, MT-CO2 and MT-CO3, encoded in the mitochondrial DNA, and 11 supernumerary subunits COX4I, COX5A, COX5B, COX6A, COX6B, COX6C, COX7A, COX7B, COX7C, COX8 and NDUFA4, which are encoded in the nuclear genome. The complex exists as a monomer or a dimer and forms supercomplexes (SCs) in the inner mitochondrial membrane with NADH-ubiquinone oxidoreductase (complex I, CI) and ubiquinol-cytochrome c oxidoreductase (cytochrome b-c1 complex, complex III, CIII), resulting in different assemblies (supercomplex SCI(1)III(2)IV(1) and megacomplex MCI(2)III(2)IV(2)). Found in a complex with TMEM177, COA6, COX18, COX20, SCO1 and SCO2. Interacts with TMEM177 in a COX20-dependent manner. Interacts with COX20. Interacts with COX16. Cu cation serves as cofactor.

Its subcellular location is the mitochondrion inner membrane. It carries out the reaction 4 Fe(II)-[cytochrome c] + O2 + 8 H(+)(in) = 4 Fe(III)-[cytochrome c] + 2 H2O + 4 H(+)(out). Its function is as follows. Component of the cytochrome c oxidase, the last enzyme in the mitochondrial electron transport chain which drives oxidative phosphorylation. The respiratory chain contains 3 multisubunit complexes succinate dehydrogenase (complex II, CII), ubiquinol-cytochrome c oxidoreductase (cytochrome b-c1 complex, complex III, CIII) and cytochrome c oxidase (complex IV, CIV), that cooperate to transfer electrons derived from NADH and succinate to molecular oxygen, creating an electrochemical gradient over the inner membrane that drives transmembrane transport and the ATP synthase. Cytochrome c oxidase is the component of the respiratory chain that catalyzes the reduction of oxygen to water. Electrons originating from reduced cytochrome c in the intermembrane space (IMS) are transferred via the dinuclear copper A center (CU(A)) of subunit 2 and heme A of subunit 1 to the active site in subunit 1, a binuclear center (BNC) formed by heme A3 and copper B (CU(B)). The BNC reduces molecular oxygen to 2 water molecules using 4 electrons from cytochrome c in the IMS and 4 protons from the mitochondrial matrix. This is Cytochrome c oxidase subunit 2 (MT-CO2) from Syncerus caffer (African buffalo).